A 588-amino-acid polypeptide reads, in one-letter code: Putative pentatricopeptide repeat-containing protein At5g52630 (588 aa).

PPR repeat units lie at residues Asn-14–Leu-48, Ile-49–Lys-79, Ser-80–Pro-114, Asp-115–Ala-149, Asp-150–Arg-180, Asn-181–Val-215, Asn-216–Ser-250, Ser-251–Lys-281, Asn-282–Pro-316, Asn-317–Pro-351, and Thr-352–Ser-386. A type E motif region spans residues Val-387 to Arg-462. The type E(+) motif stretch occupies residues Asn-463–Glu-493. A type DYW motif region spans residues Lys-494–Trp-588.

It belongs to the PPR family. PCMP-H subfamily.

This chain is Putative pentatricopeptide repeat-containing protein At5g52630 (PCMP-H52), found in Arabidopsis thaliana (Mouse-ear cress).